Here is a 111-residue protein sequence, read N- to C-terminus: Notch-regulated ankyrin repeat-containing protein B (111 aa).

2 ANK repeats span residues 47–76 (EGQT…DTRL) and 80–109 (DGWS…YSSS).

This sequence belongs to the NRARP family.

In terms of biological role, regulates independently canonical Wnt and Notch signaling by modulating LEF1 and Notch protein turnover. Stabilizes LEF1, a pivotal transcription factor in the Wnt signaling cascade, by blocking its ubiquitination. Involved in angiogenesis; involved in intersegmental vessel patterning during development. The chain is Notch-regulated ankyrin repeat-containing protein B (nrarpb) from Danio rerio (Zebrafish).